The following is a 200-amino-acid chain: Glycerol-3-phosphate acyltransferase (200 aa).

The next 4 helical transmembrane spans lie at alanine 4–glycine 24, alanine 70–isoleucine 90, leucine 110–leucine 130, and glutamine 158–arginine 178.

This sequence belongs to the PlsY family. As to quaternary structure, probably interacts with PlsX.

It is found in the cell inner membrane. It catalyses the reaction an acyl phosphate + sn-glycerol 3-phosphate = a 1-acyl-sn-glycero-3-phosphate + phosphate. It functions in the pathway lipid metabolism; phospholipid metabolism. Its function is as follows. Catalyzes the transfer of an acyl group from acyl-phosphate (acyl-PO(4)) to glycerol-3-phosphate (G3P) to form lysophosphatidic acid (LPA). This enzyme utilizes acyl-phosphate as fatty acyl donor, but not acyl-CoA or acyl-ACP. In Synechococcus sp. (strain JA-2-3B'a(2-13)) (Cyanobacteria bacterium Yellowstone B-Prime), this protein is Glycerol-3-phosphate acyltransferase.